Reading from the N-terminus, the 496-residue chain is Isocitrate dehydrogenase [NADP] (496 aa).

The NADP(+) site is built by L88 and T90. The D-threo-isocitrate site is built by S98, N100, R104, R114, and R137. 3 residues coordinate NADP(+): N193, Q229, and K232. Residue D248 participates in Mg(2+) binding. NADP(+) contacts are provided by E277, G281, S282, A283, K285, Y286, and N293.

The protein belongs to the isocitrate and isopropylmalate dehydrogenases family. As to quaternary structure, homodimer. The cofactor is Mg(2+). Mn(2+) is required as a cofactor.

It catalyses the reaction D-threo-isocitrate + NADP(+) = 2-oxoglutarate + CO2 + NADPH. In terms of biological role, catalyzes the oxidative decarboxylation of isocitrate to 2-oxoglutarate and carbon dioxide with the concomitant reduction of NADP(+). In Thermus thermophilus (strain ATCC 27634 / DSM 579 / HB8), this protein is Isocitrate dehydrogenase [NADP] (icd).